The primary structure comprises 210 residues: Riboflavin kinase (210 aa).

The interval 1–81 (MECKERRLIG…DLLRYFNIAS (81 aa)) is H-T-H motif-like. Residues 82–210 (IRLIGRVISG…GDIVEVEILL (129 aa)) form a riboflavin kinase region. Residue 91-96 (GLGEGA) coordinates CDP. Mg(2+) contacts are provided by T120 and N122. The FMN site is built by T177 and E185. Position 190–193 (190–193 (VKLR)) interacts with CDP.

The protein belongs to the archaeal riboflavin kinase family. It depends on Mg(2+) as a cofactor.

The catalysed reaction is riboflavin + CTP = CDP + FMN + H(+). It participates in cofactor biosynthesis; FMN biosynthesis; FMN from riboflavin (CTP route): step 1/1. In terms of biological role, catalyzes the CTP-dependent phosphorylation of riboflavin (vitamin B2) to form flavin mononucleotide (FMN). This chain is Riboflavin kinase (ribK), found in Pyrobaculum aerophilum (strain ATCC 51768 / DSM 7523 / JCM 9630 / CIP 104966 / NBRC 100827 / IM2).